A 100-amino-acid polypeptide reads, in one-letter code: METCQMSRSPRERLLLLLLLLLLVPWGTGPASGVALPLAGVFSLRAPGRAWAGLGSPLSRRSLALADDAAFRERARLLAALERRRWLDSYMQKLLLLDAP.

Residues 1–30 (METCQMSRSPRERLLLLLLLLLLVPWGTGP) form the signal peptide. Positions 31–59 (ASGVALPLAGVFSLRAPGRAWAGLGSPLS) are excised as a propeptide.

It belongs to the parathyroid hormone family. Ligand of high affinity for the PTH2 receptor (PTH2R). In terms of tissue distribution, expressed in testis and, less abundantly, in liver and kidney. Expressed in seminiferous tubuli and several brain regions, including nucleus ruber, caudal paralemniscal nucleus, nucleus centralis pontis, and nucleus subparafascicularis thalami. Expressed in neurons of cerebral cortex and subcortical areas. Expressed in Purkinje cells of cerebellum.

The protein localises to the secreted. Its function is as follows. Plays a role as a potent and selective agonist of PTH2R resulting in adenyl cyclase activation and intracellular calcium levels elevation. Induces protein kinase C beta activation, recruitment of beta-arrestin and PTH2R internalization. May inhibit cell proliferation via its action of PTH2R activation. Neuropeptide which may also have a role in spermatogenesis. May activate nociceptors and nociceptive circuits. This chain is Tuberoinfundibular peptide of 39 residues (Pth2), found in Mus musculus (Mouse).